The sequence spans 356 residues: Transcription factor MafB (356 aa).

2 disordered regions span residues 49 to 79 and 140 to 240; these read RLQPQGSVSSTPISTPCSSVPSSPSFSPTEQ and YRGA…LNVE. Residues 55 to 77 show a composition bias toward low complexity; that stretch reads SVSSTPISTPCSSVPSSPSFSPT. Composition is skewed to basic residues over residues 183-196 and 212-223; these read AHGHHPHHHHHHHH and HHRHHHHHHPHG. Residues 270–295 are basic motif; that stretch reads RLKQKRRTLKNRGYAQSCRFKRVQQK. Residues 270–333 form the bZIP domain; that stretch reads RLKQKRRTLK…DAYKLKCEKL (64 aa). The tract at residues 298 to 319 is leucine-zipper; sequence LENEKTQLINQVEQLKQEINRL.

It belongs to the bZIP family. Maf subfamily. Homodimer or heterodimer with other bHLH-Zip transcription factors. Binds DNA as a homodimer or a heterodimer.

The protein localises to the nucleus. Functionally, may act as a transcriptional activator or repressor. Involved in neurogenesis. Involved in the development of rhombomeres (r) 5 and 6 segments from their common precursor 'proto-segment' in the hindbrain. The polypeptide is Transcription factor MafB (mafb) (Danio rerio (Zebrafish)).